The chain runs to 269 residues: 4-hydroxy-tetrahydrodipicolinate reductase (269 aa).

Position 11 to 16 (11 to 16 (GPIGRM)) interacts with NAD(+). Lys-39 contacts NADP(+). NAD(+)-binding positions include 101 to 103 (GTT) and 125 to 128 (ASNF). Catalysis depends on His-158, which acts as the Proton donor/acceptor. His-159 serves as a coordination point for (S)-2,3,4,5-tetrahydrodipicolinate. Catalysis depends on Lys-162, which acts as the Proton donor. 168 to 169 (GT) is a binding site for (S)-2,3,4,5-tetrahydrodipicolinate.

It belongs to the DapB family. In terms of assembly, homotetramer.

The protein localises to the cytoplasm. It catalyses the reaction (S)-2,3,4,5-tetrahydrodipicolinate + NAD(+) + H2O = (2S,4S)-4-hydroxy-2,3,4,5-tetrahydrodipicolinate + NADH + H(+). The enzyme catalyses (S)-2,3,4,5-tetrahydrodipicolinate + NADP(+) + H2O = (2S,4S)-4-hydroxy-2,3,4,5-tetrahydrodipicolinate + NADPH + H(+). The protein operates within amino-acid biosynthesis; L-lysine biosynthesis via DAP pathway; (S)-tetrahydrodipicolinate from L-aspartate: step 4/4. Its function is as follows. Catalyzes the conversion of 4-hydroxy-tetrahydrodipicolinate (HTPA) to tetrahydrodipicolinate. The sequence is that of 4-hydroxy-tetrahydrodipicolinate reductase from Buchnera aphidicola subsp. Acyrthosiphon pisum (strain Tuc7).